Reading from the N-terminus, the 51-residue chain is uncharacterized protein (51 aa).

This is an uncharacterized protein from Dictyostelium discoideum (Social amoeba).